We begin with the raw amino-acid sequence, 398 residues long: Cell cycle checkpoint control protein RAD9B (398 aa).

The span at 272-281 (RTSSPQSLRL) shows a compositional bias: polar residues. The segment at 272 to 359 (RTSSPQSLRL…DMEEGQSPSP (88 aa)) is disordered. Low complexity predominate over residues 324-336 (SSSAAETRRASAS). A phosphoserine mark is found at serine 349 and serine 358.

It belongs to the rad9 family. In terms of assembly, interacts with HUS1, HUS1B, RAD1, RAD9A and RAD17.

The chain is Cell cycle checkpoint control protein RAD9B (Rad9b) from Rattus norvegicus (Rat).